The primary structure comprises 394 residues: MALQSLFLILLAGAAQLAQAHPKIFEQSRANAVETFDDAFPGDGETQADSVFSGIATFGRLPYWKCLNDKSQSFDIAFLGAPFDTGTSYRPGARFGPSGIREGSRRLNLYGGYNVPMETNPFNNWAKIVDCGDIPLTSYDNAVAIKQIENGHFELLTRKPTSYSEKDGYALDGSVLPRVITLGGDHTIVLPILRSVSRAYGPVSIIHFDSHLDSWKPKVFGGGKSSVGSINHGTYFYHASQEGLVSNDSNIHAGIRTTLSGLSDYDNDADCGFEIIEAREIDTIGIDAIIKRIRDRVGDGIAYLSIDIDVLDPAYAPATGTPESAGWTTRELRTILRGLDGIKLVGADIVEVAPAYDFAEVTTLAAADILFEVMSIMVKTPVYKEQAKQQSRFY.

The signal sequence occupies residues 1–20 (MALQSLFLILLAGAAQLAQA). Positions 186, 209, 211, 213, 307, and 309 each coordinate Mn(2+).

This sequence belongs to the arginase family. Mn(2+) is required as a cofactor.

The catalysed reaction is agmatine + H2O = urea + putrescine. The protein is Putative agmatinase 1 of Schizosaccharomyces pombe (strain 972 / ATCC 24843) (Fission yeast).